The following is a 212-amino-acid chain: Thymidylate kinase (212 aa).

10–17 (GIDGCGKT) contributes to the ATP binding site.

This sequence belongs to the thymidylate kinase family.

The catalysed reaction is dTMP + ATP = dTDP + ADP. In terms of biological role, phosphorylation of dTMP to form dTDP in both de novo and salvage pathways of dTTP synthesis. The polypeptide is Thymidylate kinase (Synechococcus sp. (strain RCC307)).